The following is a 1434-amino-acid chain: DNA-directed RNA polymerase subunit beta (1434 aa).

The protein belongs to the RNA polymerase beta chain family. As to quaternary structure, the RNAP catalytic core consists of 2 alpha, 1 beta, 1 beta' and 1 omega subunit. When a sigma factor is associated with the core the holoenzyme is formed, which can initiate transcription.

It carries out the reaction RNA(n) + a ribonucleoside 5'-triphosphate = RNA(n+1) + diphosphate. DNA-dependent RNA polymerase catalyzes the transcription of DNA into RNA using the four ribonucleoside triphosphates as substrates. This Ureaplasma urealyticum serovar 10 (strain ATCC 33699 / Western) protein is DNA-directed RNA polymerase subunit beta.